A 396-amino-acid polypeptide reads, in one-letter code: Phosphoglycerate kinase (396 aa).

Substrate-binding positions include 21–23 (DFN), Arg37, 60–63 (HLGR), Arg121, and Arg154. ATP is bound by residues Lys205, Gly296, Glu327, and 353–356 (GGDS).

The protein belongs to the phosphoglycerate kinase family. Monomer.

It localises to the cytoplasm. It carries out the reaction (2R)-3-phosphoglycerate + ATP = (2R)-3-phospho-glyceroyl phosphate + ADP. It participates in carbohydrate degradation; glycolysis; pyruvate from D-glyceraldehyde 3-phosphate: step 2/5. The sequence is that of Phosphoglycerate kinase from Anaeromyxobacter dehalogenans (strain 2CP-C).